Reading from the N-terminus, the 138-residue chain is MAKPIPRIGSRRNGRIGSRKSARRIPKGVIHVQASFNNTIVTVTDVRGRVVSWSSAGTCGFRGTRRGTPFAAQTAAGNAIRTVVDQGMQRAEVMIKGPGLGRDAALRAIRRSGILLSFVRDVTPMPHNGCRPPKKRRV.

The segment at 1 to 23 (MAKPIPRIGSRRNGRIGSRKSAR) is disordered. The span at 9 to 23 (GSRRNGRIGSRKSAR) shows a compositional bias: basic residues.

This sequence belongs to the universal ribosomal protein uS11 family. In terms of assembly, part of the 30S ribosomal subunit.

The protein localises to the plastid. It localises to the chloroplast. The sequence is that of Small ribosomal subunit protein uS11c from Vitis vinifera (Grape).